Reading from the N-terminus, the 269-residue chain is Seven in absentia homolog 3 (269 aa).

Residues 61 to 132 (GSFHPHHLSH…VVPHLRQIHR (72 aa)) form an SIAH-type; degenerate zinc finger. Zn(2+) is bound by residues cysteine 107, cysteine 114, histidine 126, and histidine 131.

This sequence belongs to the SINA (Seven in absentia) family.

It localises to the mitochondrion. Functionally, negative regulator of PRKN translocation to damaged mitochondria. Acts probably by destabilizing PINK1 protein, hence inhibiting PRKN targeting to dysfunctional depolarized mitochondria. In Homo sapiens (Human), this protein is Seven in absentia homolog 3 (SIAH3).